The primary structure comprises 198 residues: tRNA (pseudouridine(54)-N(1))-methyltransferase (198 aa).

Leucine 128 lines the S-adenosyl-L-methionine pocket.

The protein belongs to the methyltransferase superfamily. TrmY family. In terms of assembly, homodimer.

The protein localises to the cytoplasm. It carries out the reaction pseudouridine(54) in tRNA + S-adenosyl-L-methionine = N(1)-methylpseudouridine(54) in tRNA + S-adenosyl-L-homocysteine + H(+). Specifically catalyzes the N1-methylation of pseudouridine at position 54 (Psi54) in tRNAs. This is tRNA (pseudouridine(54)-N(1))-methyltransferase from Haloarcula marismortui (strain ATCC 43049 / DSM 3752 / JCM 8966 / VKM B-1809) (Halobacterium marismortui).